A 185-amino-acid polypeptide reads, in one-letter code: Ribosome-recycling factor (185 aa).

This sequence belongs to the RRF family.

Its subcellular location is the cytoplasm. Functionally, responsible for the release of ribosomes from messenger RNA at the termination of protein biosynthesis. May increase the efficiency of translation by recycling ribosomes from one round of translation to another. This chain is Ribosome-recycling factor, found in Clostridium beijerinckii (strain ATCC 51743 / NCIMB 8052) (Clostridium acetobutylicum).